Consider the following 416-residue polypeptide: 26S proteasome regulatory subunit 8 (416 aa).

Positions 1–18 (MAPPASTASSADPSKPTA) are enriched in low complexity. The segment at 1-29 (MAPPASTASSADPSKPTAQKLTEESDEKT) is disordered. 200–207 (GPPGTGKT) contributes to the ATP binding site.

This sequence belongs to the AAA ATPase family. As to quaternary structure, component of the 19S proteasome regulatory particle complex. The 26S proteasome consists of a 20S core particle (CP) and two 19S regulatory subunits (RP). Interacts with elt-2.

It is found in the cytoplasm. The protein resides in the nucleus. Its function is as follows. Component of the 26S proteasome, a multiprotein complex involved in the ATP-dependent degradation of ubiquitinated proteins. This complex plays a key role in the maintenance of protein homeostasis by removing misfolded or damaged proteins, which could impair cellular functions, and by removing proteins whose functions are no longer required. Therefore, the proteasome participates in numerous cellular processes, including cell cycle progression, apoptosis, or DNA damage repair. Belongs to the heterohexameric ring of AAA (ATPases associated with diverse cellular activities) proteins that unfolds ubiquitinated target proteins that are concurrently translocated into a proteolytic chamber and degraded into peptides. In addition, regulates gene expression in response to bacterial infection. Binds to the GATA transcription factor elt-2 to control its transcriptional activity and thus the expression of elt-2-dependent genes in response to infection by Gram-negative bacteria such as P.aeruginosa. The chain is 26S proteasome regulatory subunit 8 from Caenorhabditis elegans.